Consider the following 374-residue polypeptide: Putative 12-oxophytodienoate reductase 5 (374 aa).

Residues P30–T32, A63, and Q105 contribute to the FMN site. A substrate-binding site is contributed by H177–N180. Catalysis depends on Y182, which acts as the Proton donor. Residue R229 coordinates FMN. Residue R270 participates in substrate binding. FMN-binding positions include G300 and G321–R322.

This sequence belongs to the NADH:flavin oxidoreductase/NADH oxidase family. FMN is required as a cofactor.

Its function is as follows. Putative oxophytodienoate reductase that may be involved in the biosynthesis or metabolism of oxylipin signaling molecules. This is Putative 12-oxophytodienoate reductase 5 (OPR5) from Oryza sativa subsp. japonica (Rice).